The chain runs to 269 residues: uncharacterized protein (269 aa).

Residues 52–262 (KNVYEQLVAT…RKILVESINK (211 aa)) are a coiled coil.

This is an uncharacterized protein from Caenorhabditis elegans.